The chain runs to 371 residues: tRNA-specific 2-thiouridylase MnmA (371 aa).

Residues 12-19 (GMSGGVDS) and Met38 contribute to the ATP site. An interaction with target base in tRNA region spans residues 98–100 (NPD). Cys103 functions as the Nucleophile in the catalytic mechanism. A disulfide bridge connects residues Cys103 and Cys200. An ATP-binding site is contributed by Gly127. The segment at 150-152 (KDQ) is interaction with tRNA. Cys200 acts as the Cysteine persulfide intermediate in catalysis. An interaction with tRNA region spans residues 308-309 (RY).

This sequence belongs to the MnmA/TRMU family.

The protein resides in the cytoplasm. It carries out the reaction S-sulfanyl-L-cysteinyl-[protein] + uridine(34) in tRNA + AH2 + ATP = 2-thiouridine(34) in tRNA + L-cysteinyl-[protein] + A + AMP + diphosphate + H(+). Its function is as follows. Catalyzes the 2-thiolation of uridine at the wobble position (U34) of tRNA, leading to the formation of s(2)U34. In Oceanobacillus iheyensis (strain DSM 14371 / CIP 107618 / JCM 11309 / KCTC 3954 / HTE831), this protein is tRNA-specific 2-thiouridylase MnmA.